We begin with the raw amino-acid sequence, 908 residues long: MDFRNSFKSHSSYKQIRSPGDQSEPSPEHLPILHDHHPDHSGMVVDDQKPDSTRSSLDDGRNAPVERDASYKFWQDNTTGTSTDHTAVRTSDKDPIAISRKGDRLSGSFDFVHGKLPVDESPTKMVAGEPVNRQWRGRNNEEITLDVDQENDDVSHQTMPTPTSTARTSFDASREMRVSFNVRRAGGAFVAGSVPSSSSHSSSSSSATMRTNQDQPQLQEEEVVRCTSNMSFQRKSELISRVKTRSRLQDPPREEETPYSGWRSGQLKSGLLADIDEEDDPLAEEDVPDEYKRGKLDAITLLQWLSLVAIIAALACSLSIQSWKKVRVWNLHLWKWEVFLLVLICGRLVSGWGIRIVVFFIERNFLLRKRVLYFVYGVRRAVQNCLWLGLVLLAWHFLFDKKVQRETRSRFLPYVTKILVCFLLSTILWLIKTLVVKVLASSFHVSTYFDRIQEALFNQYVIETLSGPPMIEMSRIEEEEERAQDEIFKMQNAGANLPPDLCAAAFPPGKSGRVMNPKLSPIIPKSTTDNGISMEHLHRMNHKNISAWNMKRLMKIVRNVSLTTLDEQMLESTYEDESTRQIRSEKEAKAAARKIFKNVEQRGAKYIYLEDLMRFLREDEAMKTMGLFEGAPENKRISKSALKNWLVNAFRERRALALTLNDTKTAVNKLHHMINIVTAIVIVVIWLVLLEIASSKVLLFVSSQVVLLAFIFGNTVKTVFESIIFLFIVHPYDVGDRCEIDSVQLVVEEMNILTTVFLRYDNLKIMYPNSLLWQKSINNYYRSPDMGDAIEFCVHITTPLEKISVIKQRISNYIDNKPEYWYPQAKIIVKDLEDLHIVRLAIWPCHRINHQDMAERWTRRAVLVEEVIKILLELDIQHRFYPLDINVRTMPTVVSSRVPPGWSQNQPA.

Over residues M1–P25 the composition is skewed to polar residues. Disordered regions lie at residues M1–V88, D148–A172, V190–E221, and V242–G265. Basic and acidic residues predominate over residues P31–S70. 2 stretches are compositionally biased toward polar residues: residues Q75 to H85 and H156 to D171. The segment covering S196–S206 has biased composition (low complexity). Polar residues predominate over residues A207–L218. Residues R247–E256 show a composition bias toward basic and acidic residues. Transmembrane regions (helical) follow at residues A298–L318, L341–I361, A381–K401, F411–I431, M673–A693, and A709–V729.

Belongs to the MscS (TC 1.A.23) family. In terms of tissue distribution, expressed in tricellular and mature pollen, and in germinating tube. Not detected in leaves or roots.

It is found in the cell membrane. It localises to the endomembrane system. With respect to regulation, not regulated by MgCl(2), ruthenium red or tetramethylammonium-Cl. Its function is as follows. Mechanosensitive channel that opens in response to stretch forces in the membrane lipid bilayer. Exhibits a 6.3-fold preference for chloride over sodium. Regulates osmotic forces during pollen hydration and germination. This Arabidopsis thaliana (Mouse-ear cress) protein is Mechanosensitive ion channel protein 8.